Reading from the N-terminus, the 164-residue chain is Vesiculogenesis and immune response regulator (164 aa).

In terms of processing, could be O-mannosylated. Is likely mannosylated on Thr-61 when overexpressed in M.smegmatis.

The protein localises to the cell inner membrane. It localises to the cytoplasm. Its function is as follows. Virulence factor that regulates vesiculogenesis. Acts by regulating the production of mycobacterial membrane vesicles (MV) bearing Toll-like receptor 2 (TLR2) ligands, including the lipoproteins LpqH, a major host TLR2 agonist, and SodC. By restraining the release of most of the material that activates host cells through TLR2, VirR reduces the immunostimulant potential of M.tuberculosis and increases its virulence. May contribute to cell envelope integrity. In terms of biological role, when overexpressed in M.smegmatis, it modulates the production of IL-10, IL-12 p40 and TNF-alpha by RAW264.7 macrophages and it decreases the killing of M.smegmatis. This chain is Vesiculogenesis and immune response regulator, found in Mycobacterium tuberculosis (strain ATCC 25618 / H37Rv).